The following is a 134-amino-acid chain: Galectin-1 (134 aa).

A1 is subject to N-acetylalanine. One can recognise a Galectin domain in the interval 4 to 134 (GVAVTNLNLK…GLAFKSITTE (131 aa)). A beta-D-galactoside contacts are provided by residues 45–49 (HFNAR), H53, N62, and 69–72 (WGSE).

In terms of assembly, homodimer.

The protein localises to the secreted. Its subcellular location is the extracellular space. The protein resides in the extracellular matrix. May regulate cell apoptosis and cell differentiation. Binds beta-galactoside and a wide array of complex carbohydrates. The protein is Galectin-1 of Rhinella arenarum (Argentine common toad).